The primary structure comprises 197 residues: Holliday junction branch migration complex subunit RuvA (197 aa).

A domain I region spans residues methionine 1–leucine 64. A domain II region spans residues threonine 65 to glutamine 143. The flexible linker stretch occupies residues isoleucine 144–valine 148. A domain III region spans residues threonine 149–lysine 197.

It belongs to the RuvA family. In terms of assembly, homotetramer. Forms an RuvA(8)-RuvB(12)-Holliday junction (HJ) complex. HJ DNA is sandwiched between 2 RuvA tetramers; dsDNA enters through RuvA and exits via RuvB. An RuvB hexamer assembles on each DNA strand where it exits the tetramer. Each RuvB hexamer is contacted by two RuvA subunits (via domain III) on 2 adjacent RuvB subunits; this complex drives branch migration. In the full resolvosome a probable DNA-RuvA(4)-RuvB(12)-RuvC(2) complex forms which resolves the HJ.

It localises to the cytoplasm. In terms of biological role, the RuvA-RuvB-RuvC complex processes Holliday junction (HJ) DNA during genetic recombination and DNA repair, while the RuvA-RuvB complex plays an important role in the rescue of blocked DNA replication forks via replication fork reversal (RFR). RuvA specifically binds to HJ cruciform DNA, conferring on it an open structure. The RuvB hexamer acts as an ATP-dependent pump, pulling dsDNA into and through the RuvAB complex. HJ branch migration allows RuvC to scan DNA until it finds its consensus sequence, where it cleaves and resolves the cruciform DNA. The polypeptide is Holliday junction branch migration complex subunit RuvA (Clostridium botulinum (strain Loch Maree / Type A3)).